The chain runs to 144 residues: Flagellar assembly factor FliW (144 aa).

Belongs to the FliW family. In terms of assembly, interacts with translational regulator CsrA and flagellin(s).

The protein resides in the cytoplasm. Its function is as follows. Acts as an anti-CsrA protein, binds CsrA and prevents it from repressing translation of its target genes, one of which is flagellin. Binds to flagellin and participates in the assembly of the flagellum. The polypeptide is Flagellar assembly factor FliW (Geobacillus kaustophilus (strain HTA426)).